The chain runs to 89 residues: Small ribosomal subunit protein uS15 (89 aa).

The protein belongs to the universal ribosomal protein uS15 family. Part of the 30S ribosomal subunit. Forms a bridge to the 50S subunit in the 70S ribosome, contacting the 23S rRNA.

One of the primary rRNA binding proteins, it binds directly to 16S rRNA where it helps nucleate assembly of the platform of the 30S subunit by binding and bridging several RNA helices of the 16S rRNA. In terms of biological role, forms an intersubunit bridge (bridge B4) with the 23S rRNA of the 50S subunit in the ribosome. This Staphylococcus carnosus (strain TM300) protein is Small ribosomal subunit protein uS15.